Reading from the N-terminus, the 1429-residue chain is Autophagy-related protein 11 (1429 aa).

4 coiled-coil regions span residues Gly-540–Ala-579, Glu-616–His-808, Thr-842–Ser-985, and Arg-1106–Asp-1135. The disordered stretch occupies residues His-574–Met-622. Polar residues predominate over residues Arg-575–Gln-592. Basic and acidic residues predominate over residues Ser-606–Glu-616. Disordered regions lie at residues Ser-1205–Asn-1224 and Arg-1333–Arg-1405. Polar residues-rich tracts occupy residues Lys-1206–Glu-1215 and Arg-1333–Asn-1362. Residues Lys-1384–Ser-1398 show a composition bias toward basic and acidic residues.

Belongs to the ATG11 family. As to quaternary structure, homodimer and potential homooligomers. Interacts with ATG1 kinase and the ATG19 and ATG34 cargo protein transporters. Interacts with ATG9, ATG17 and ATG20.

The protein localises to the preautophagosomal structure membrane. It is found in the vacuole membrane. Involved in cytoplasm to vacuole transport (Cvt), pexophagy, mitophagy and nucleophagy. Recruits mitochondria for their selective degradation via autophagy (mitophagy) during starvation, through its interaction with ATG32. Works as scaffold proteins that recruit ATG proteins to the pre-autophagosome (PAS), the site of vesicle/autophagosome formation. Required for ATG9 anterograde transport from the mitochondria to the PAS. Also recruits the ATG19-prAPE1 complex to the PAS. Required for the Cvt vesicles completion. Autophagy is required for proper vegetative growth, asexual/sexual reproduction, and full virulence. Autophagy is particularly involved in the biosynthesis of deoxynivalenol (DON), an important virulence determinant. This Gibberella zeae (strain ATCC MYA-4620 / CBS 123657 / FGSC 9075 / NRRL 31084 / PH-1) (Wheat head blight fungus) protein is Autophagy-related protein 11.